The chain runs to 418 residues: Light-independent protochlorophyllide reductase subunit N (418 aa).

Positions 17, 42, and 103 each coordinate [4Fe-4S] cluster.

The protein belongs to the BchN/ChlN family. Protochlorophyllide reductase is composed of three subunits; ChlL, ChlN and ChlB. Forms a heterotetramer of two ChlB and two ChlN subunits. [4Fe-4S] cluster serves as cofactor.

The catalysed reaction is chlorophyllide a + oxidized 2[4Fe-4S]-[ferredoxin] + 2 ADP + 2 phosphate = protochlorophyllide a + reduced 2[4Fe-4S]-[ferredoxin] + 2 ATP + 2 H2O. Its pathway is porphyrin-containing compound metabolism; chlorophyll biosynthesis (light-independent). Its function is as follows. Component of the dark-operative protochlorophyllide reductase (DPOR) that uses Mg-ATP and reduced ferredoxin to reduce ring D of protochlorophyllide (Pchlide) to form chlorophyllide a (Chlide). This reaction is light-independent. The NB-protein (ChlN-ChlB) is the catalytic component of the complex. This is Light-independent protochlorophyllide reductase subunit N from Prochlorococcus marinus (strain MIT 9312).